We begin with the raw amino-acid sequence, 214 residues long: Orotate phosphoribosyltransferase (214 aa).

Lys26 lines the 5-phospho-alpha-D-ribose 1-diphosphate pocket. 34–35 (FF) is an orotate binding site. 5-phospho-alpha-D-ribose 1-diphosphate is bound by residues 72–73 (YK), Arg99, Lys100, Lys103, His105, and 124–132 (DDVITAGTA). Residues Thr128 and Arg156 each contribute to the orotate site.

It belongs to the purine/pyrimidine phosphoribosyltransferase family. PyrE subfamily. As to quaternary structure, homodimer. Mg(2+) serves as cofactor.

The enzyme catalyses orotidine 5'-phosphate + diphosphate = orotate + 5-phospho-alpha-D-ribose 1-diphosphate. The protein operates within pyrimidine metabolism; UMP biosynthesis via de novo pathway; UMP from orotate: step 1/2. Catalyzes the transfer of a ribosyl phosphate group from 5-phosphoribose 1-diphosphate to orotate, leading to the formation of orotidine monophosphate (OMP). The sequence is that of Orotate phosphoribosyltransferase from Pseudoalteromonas translucida (strain TAC 125).